A 128-amino-acid chain; its full sequence is Large ribosomal subunit protein bL17 (128 aa).

The protein belongs to the bacterial ribosomal protein bL17 family. In terms of assembly, part of the 50S ribosomal subunit. Contacts protein L32.

This is Large ribosomal subunit protein bL17 from Histophilus somni (strain 129Pt) (Haemophilus somnus).